Here is a 150-residue protein sequence, read N- to C-terminus: 3-dehydroquinate dehydratase (150 aa).

Catalysis depends on tyrosine 22, which acts as the Proton acceptor. Substrate contacts are provided by asparagine 73, histidine 79, and aspartate 86. Histidine 99 acts as the Proton donor in catalysis. Substrate contacts are provided by residues 100–101 (LT) and arginine 110.

The protein belongs to the type-II 3-dehydroquinase family. Homododecamer.

The catalysed reaction is 3-dehydroquinate = 3-dehydroshikimate + H2O. The protein operates within metabolic intermediate biosynthesis; chorismate biosynthesis; chorismate from D-erythrose 4-phosphate and phosphoenolpyruvate: step 3/7. Catalyzes a trans-dehydration via an enolate intermediate. In Desulforudis audaxviator (strain MP104C), this protein is 3-dehydroquinate dehydratase.